The primary structure comprises 667 residues: MYRISPIGRKSNFHSREKCLIGLVLVTLCFLCFGGIFLLPDNFGSDRVLRVYKHFRKAGPEIFIPAPPLAAHAPHRSEDPHFIGDRQRLEQKIRAELGDMLDEPPAAGGGEPGQFQVLAQQAQAPAPVAALADQPLDQDEGHAAIPVLAAPVQGDNAASQASSHPQSSAQQHNQQQPQLPLGGGGNDQAPDTLDATLEERRQKVKEMMEHAWHNYKLYAWGKNELRPLSQRPHSASIFGSYDLGATIVDGLDTLYIMGLEKEYREGRDWIERKFSLDNISAELSVFETNIRFVGGMLTLYAFTGDPLYKEKAQHVADKLLPAFQTPTGIPYALVNTKTGVAKNYGWASGGSSILSEFGTLHLEFAYLSDITGNPLYRERVQTIRQVLKEIEKPKGLYPNFLNPKTGKWGQLHMSLGALGDSYYEYLLKAWLQSGQTDEEAREMFDEAMLAILDKMVRTSPGGLTYVSDLKFDRLEHKMDHLACFSGGLFALGAATRQNDYTDKYMEVGKGITNTCHESYIRAPTQLGPEAFRFSEAVEARALRSQEKYYILRPETFESYFVLWRLTHDQKYRDWGWEAVLALEKHCRTAHGYCGLRNVYQQEPQKDDVQQSFFLAETLKYLYLLFSDDSVLPLDEWVFNTEAHPLPIKGANAYYRQAPVTLPVSNAS.

The Cytoplasmic segment spans residues 1-18; the sequence is MYRISPIGRKSNFHSREK. A helical; Signal-anchor for type II membrane protein membrane pass occupies residues 19-39; that stretch reads CLIGLVLVTLCFLCFGGIFLL. The Lumenal segment spans residues 40-667; the sequence is PDNFGSDRVL…PVTLPVSNAS (628 aa). The segment at 154-192 is disordered; that stretch reads GDNAASQASSHPQSSAQQHNQQQPQLPLGGGGNDQAPDT. The span at 156–178 shows a compositional bias: low complexity; it reads NAASQASSHPQSSAQQHNQQQPQ. N-linked (GlcNAc...) asparagine glycosylation occurs at asparagine 278. Cysteine 483 and cysteine 515 are joined by a disulfide. Glutamate 529 acts as the Proton donor in catalysis. Residue threonine 640 participates in Ca(2+) binding.

This sequence belongs to the glycosyl hydrolase 47 family. It depends on Ca(2+) as a cofactor. Mg(2+) serves as cofactor. In terms of tissue distribution, complex spatial distribution during embryogenesis, including expression in lobula plate giant neurons. Also expressed in adult wing and eyes.

It is found in the golgi apparatus membrane. The catalysed reaction is N(4)-(alpha-D-Man-(1-&gt;2)-alpha-D-Man-(1-&gt;2)-alpha-D-Man-(1-&gt;3)-[alpha-D-Man-(1-&gt;2)-alpha-D-Man-(1-&gt;3)-[alpha-D-Man-(1-&gt;2)-alpha-D-Man-(1-&gt;6)]-alpha-D-Man-(1-&gt;6)]-beta-D-Man-(1-&gt;4)-beta-D-GlcNAc-(1-&gt;4)-beta-D-GlcNAc)-L-asparaginyl-[protein] (N-glucan mannose isomer 9A1,2,3B1,2,3) + 4 H2O = N(4)-(alpha-D-Man-(1-&gt;3)-[alpha-D-Man-(1-&gt;3)-[alpha-D-Man-(1-&gt;6)]-alpha-D-Man-(1-&gt;6)]-beta-D-Man-(1-&gt;4)-beta-D-GlcNAc-(1-&gt;4)-beta-D-GlcNAc)-L-asparaginyl-[protein] (N-glucan mannose isomer 5A1,2) + 4 beta-D-mannose. The enzyme catalyses N(4)-(alpha-D-Man-(1-&gt;2)-alpha-D-Man-(1-&gt;2)-alpha-D-Man-(1-&gt;3)-[alpha-D-Man-(1-&gt;3)-[alpha-D-Man-(1-&gt;2)-alpha-D-Man-(1-&gt;6)]-alpha-D-Man-(1-&gt;6)]-beta-D-Man-(1-&gt;4)-beta-D-GlcNAc-(1-&gt;4)-beta-D-GlcNAc)-L-asparaginyl-[protein] (N-glucan mannose isomer 8A1,2,3B1,3) + 3 H2O = N(4)-(alpha-D-Man-(1-&gt;3)-[alpha-D-Man-(1-&gt;3)-[alpha-D-Man-(1-&gt;6)]-alpha-D-Man-(1-&gt;6)]-beta-D-Man-(1-&gt;4)-beta-D-GlcNAc-(1-&gt;4)-beta-D-GlcNAc)-L-asparaginyl-[protein] (N-glucan mannose isomer 5A1,2) + 3 beta-D-mannose. The protein operates within protein modification; protein glycosylation. Functionally, involved in the maturation of Asn-linked oligosaccharides. Progressively trim alpha-1,2-linked mannose residues from Man(9)GlcNAc(2) to produce Man(5)GlcNAc(2). This Drosophila melanogaster (Fruit fly) protein is Mannosyl-oligosaccharide alpha-1,2-mannosidase IA.